The chain runs to 137 residues: MKYRFIDHTADIAFEVYGSNLRELFENAALAFYDAFVDTSGIGIEREVGVECEGEDVEITLYRWLNELLYLFDTEFFAAKDVEVEVEEGDGVKASGKLRGGRFSAEMVKVEPKAITLHKFRVEKTDKGYVAFVVVDI.

3 residues coordinate Ca(2+): aspartate 11, aspartate 136, and isoleucine 137.

It belongs to the archease family.

In terms of biological role, activates the tRNA-splicing ligase complex by facilitating the enzymatic turnover of catalytic subunit RtcB. Acts by promoting the guanylylation of RtcB, a key intermediate step in tRNA ligation. Can also alter the NTP specificity of RtcB such that ATP, dGTP or ITP is used efficiently. In Archaeoglobus fulgidus (strain ATCC 49558 / DSM 4304 / JCM 9628 / NBRC 100126 / VC-16), this protein is Protein archease.